A 425-amino-acid chain; its full sequence is 2,3-diketo-L-gulonate TRAP transporter large permease protein YiaN (425 aa).

Helical transmembrane passes span 3 to 23 (VLIF…IAWA), 54 to 74 (FSLL…AGGL), 93 to 113 (LGYV…SAVA), 139 to 159 (LIAS…FIIF), 170 to 190 (LFMA…LTWW), 209 to 229 (IWHS…IIGG), 235 to 255 (FTPT…ATVI), 277 to 297 (VVMF…IAEL), 314 to 334 (LLFI…DLTP), 355 to 375 (IYFG…PPIG), and 399 to 419 (YVLV…LIIL).

Belongs to the TRAP transporter large permease family. The complex comprises the extracytoplasmic solute receptor protein YiaO, and the two transmembrane proteins YiaM and YiaN.

It is found in the cell inner membrane. Its function is as follows. Part of the tripartite ATP-independent periplasmic (TRAP) transport system YiaMNO involved in the uptake of 2,3-diketo-L-gulonate. The protein is 2,3-diketo-L-gulonate TRAP transporter large permease protein YiaN (yiaN) of Escherichia coli (strain K12).